We begin with the raw amino-acid sequence, 221 residues long: uncharacterized protein (221 aa).

The interval 40–162 is disordered; sequence TIEVEPSPVQ…EPPEKVELSP (123 aa). Residues 47–60 are compositionally biased toward polar residues; it reads PVQQDNPPISSEQA. Over residues 82–92 the composition is skewed to low complexity; that stretch reads SSAQQEATAQT.

This is an uncharacterized protein from Homo sapiens (Human).